The primary structure comprises 64 residues: uncharacterized protein (64 aa).

Residues 33–55 (YTPLGSYMIFGIVHYFCSYHIGI) form a helical membrane-spanning segment.

The protein resides in the membrane. This is an uncharacterized protein from Saccharomyces cerevisiae (strain ATCC 204508 / S288c) (Baker's yeast).